A 119-amino-acid polypeptide reads, in one-letter code: UPF0344 protein lp_1373 (119 aa).

The next 4 helical transmembrane spans lie at 1–21 (MYLL…AIGL), 32–52 (FLIL…ALAI), 60–80 (WLTL…EVAF), and 92–112 (LVTL…GLHW).

It belongs to the UPF0344 family.

It is found in the cell membrane. The sequence is that of UPF0344 protein lp_1373 from Lactiplantibacillus plantarum (strain ATCC BAA-793 / NCIMB 8826 / WCFS1) (Lactobacillus plantarum).